A 366-amino-acid chain; its full sequence is NADH-quinone oxidoreductase subunit D (366 aa).

It belongs to the complex I 49 kDa subunit family. In terms of assembly, NDH-1 is composed of 14 different subunits. Subunits NuoB, C, D, E, F, and G constitute the peripheral sector of the complex.

The protein localises to the cell membrane. It catalyses the reaction a quinone + NADH + 5 H(+)(in) = a quinol + NAD(+) + 4 H(+)(out). Functionally, NDH-1 shuttles electrons from NADH, via FMN and iron-sulfur (Fe-S) centers, to quinones in the respiratory chain. The immediate electron acceptor for the enzyme in this species is believed to be a menaquinone. Couples the redox reaction to proton translocation (for every two electrons transferred, four hydrogen ions are translocated across the cytoplasmic membrane), and thus conserves the redox energy in a proton gradient. This chain is NADH-quinone oxidoreductase subunit D, found in Desulforamulus reducens (strain ATCC BAA-1160 / DSM 100696 / MI-1) (Desulfotomaculum reducens).